A 91-amino-acid polypeptide reads, in one-letter code: Probable insulin-like peptide gamma-type 1 (91 aa).

The first 26 residues, 1 to 26 (MSSYRQTLFILIILIVIILFVNEGQG), serve as a signal peptide directing secretion. 3 cysteine pairs are disulfide-bonded: cysteine 37–cysteine 66, cysteine 49–cysteine 79, and cysteine 65–cysteine 70.

Belongs to the insulin family.

Its subcellular location is the secreted. This is Probable insulin-like peptide gamma-type 1 (ins-11) from Caenorhabditis elegans.